The sequence spans 1003 residues: Leucine-rich repeat receptor-like serine/threonine-protein kinase BAM1 (1003 aa).

An N-terminal signal peptide occupies residues 1 to 19 (MKLFLLLLFLLHISHTFTA). Residues 20–640 (SRPISEFRAL…HSKGPLSASM (621 aa)) are Extracellular-facing. LRR repeat units lie at residues 68–92 (RRHV…VSHL), 93–116 (RLLQ…ISSL), 117–140 (SGLR…ISSG), 142–165 (VNLR…VTNL), 166–191 (TQLR…SWPV), 193–213 (EYLA…IGNL), 215–238 (TLRE…IGNL), 239–262 (SELV…IGKL), 263–285 (QKLD…ELGT), 286–310 (LSSL…FAEL), 312–334 (NLTL…IGDL), 335–358 (PELE…LGEN), 359–382 (GKLN…MCSG), 385–406 (LETL…LGKC), 407–430 (ESLT…LFGL), 432–454 (KLTQ…GGVS), 455–480 (VNLG…NFTG), 482–502 (QKLL…VGKL), 503–526 (QQLS…ISRC), 527–550 (KLLT…ITAM), 551–574 (KILN…ISSM), and 575–598 (QSLT…GQFS). N-linked (GlcNAc...) asparagine glycans are attached at residues N80, N97, N123, N130, N153, and N164. Residues N212 and N237 are each glycosylated (N-linked (GlcNAc...) asparagine). N312 and N346 each carry an N-linked (GlcNAc...) asparagine glycan. An N-linked (GlcNAc...) asparagine glycan is attached at N420. An N-linked (GlcNAc...) asparagine glycan is attached at N477. N-linked (GlcNAc...) asparagine glycans are attached at residues N557, N586, and N601. A helical transmembrane segment spans residues 641 to 661 (KLLLVLGLLVCSIAFAVVAII). At 662 to 1003 (KARSLKKASE…VQSPPDLLNL (342 aa)) the chain is on the cytoplasmic side. At T686 the chain carries Phosphothreonine. The region spanning 694–971 (LKEDNIIGKG…VQILTEIPKL (278 aa)) is the Protein kinase domain. Residues 700 to 708 (IGKGGAGIV) and K722 each bind ATP. Phosphotyrosine occurs at positions 769 and 807. D820 (proton acceptor) is an active-site residue. A Phosphoserine modification is found at S855. Phosphotyrosine is present on residues Y863 and Y870. T871 carries the post-translational modification Phosphothreonine. The segment at 969–1003 (PKLPPSKDQPMTESAPESELSPKSGVQSPPDLLNL) is disordered. At S996 the chain carries Phosphoserine.

The protein belongs to the protein kinase superfamily. Ser/Thr protein kinase family. As to quaternary structure, self-interacts and interacts with BAM2 and CLV1. Binds to the CLV3, CLE5, CLE11, CLE18, CLE19, CLE22, CLE25, CLE26, CLE40, CLE41 and CLE42 mature peptides, probably via its extracellular leucine-rich repeat region. In terms of tissue distribution, expressed in seedlings, roots, leaves, inflorescences, flowers and siliques.

It localises to the cell membrane. It catalyses the reaction L-seryl-[protein] + ATP = O-phospho-L-seryl-[protein] + ADP + H(+). The catalysed reaction is L-threonyl-[protein] + ATP = O-phospho-L-threonyl-[protein] + ADP + H(+). Necessary for male gametophyte development, as well as ovule specification and function. Involved in cell-cell communication process required during early anther development, and regulating cell division and differentiation to organize cell layers. Required for the development of high-ordered vascular strands within the leaf and a correlated control of leaf shape, size and symmetry. May regulate the CLV1-dependent CLV3-mediated signaling in meristems maintenance. This Arabidopsis thaliana (Mouse-ear cress) protein is Leucine-rich repeat receptor-like serine/threonine-protein kinase BAM1 (BAM1).